We begin with the raw amino-acid sequence, 151 residues long: MPQTIYVLNGPNLNLLGTREPAIYGHATLADVERLCTETAASCGLSAVCRQSNHEGELIDWIHQARDEQAVGIVLNAGGYTHTSVALHDALVGVQIPAVEVHVSNVFARDSFRHHSFIAKAAFASLCGFGIDGYRLAILGLAAKIGTSAKA.

Catalysis depends on Y24, which acts as the Proton acceptor. N76, H82, and D89 together coordinate substrate. H102 (proton donor) is an active-site residue. Substrate is bound by residues 103-104 and R113; that span reads VS.

This sequence belongs to the type-II 3-dehydroquinase family. In terms of assembly, homododecamer.

It carries out the reaction 3-dehydroquinate = 3-dehydroshikimate + H2O. It functions in the pathway metabolic intermediate biosynthesis; chorismate biosynthesis; chorismate from D-erythrose 4-phosphate and phosphoenolpyruvate: step 3/7. Functionally, catalyzes a trans-dehydration via an enolate intermediate. The sequence is that of 3-dehydroquinate dehydratase from Rhodopseudomonas palustris (strain HaA2).